A 301-amino-acid polypeptide reads, in one-letter code: Aquaporin-10 (301 aa).

Topologically, residues 1–22 are cytoplasmic; that stretch reads MVFTQAPAEIMGHLRIRSLLAR. A helical transmembrane segment spans residues 23–41; the sequence is QCLAEFLGVFVLMLLTQGA. Over 42–55 the chain is Extracellular; it reads VAQAVTSGETKGNF. Residues 56–75 form a helical membrane-spanning segment; the sequence is FTMFLAGSLAVTIAIYVGGN. Residues 76–77 lie on the Cytoplasmic side of the membrane; the sequence is VS. Positions 78–90 form an intramembrane region, discontinuously helical; it reads GAHLNPAFSLAMC. The short motif at 82-84 is the NPA 1 element; it reads NPA. At 91–96 the chain is on the cytoplasmic side; the sequence is IVGRLP. Residues 97–121 form a helical membrane-spanning segment; it reads WVKLPIYILVQLLSAFCASGATYVL. Residues 122–158 lie on the Extracellular side of the membrane; sequence YHDALQNYTGGNLTVTGPKETASIFATYPAPYLSLNN. Residues asparagine 128 and asparagine 133 are each glycosylated (N-linked (GlcNAc...) asparagine). Residues 159–176 traverse the membrane as a helical segment; that stretch reads GFLDQVLGTGMLIVGLLA. Residues 177–188 are Cytoplasmic-facing; it reads ILDRRNKGVPAG. A helical membrane pass occupies residues 189–205; the sequence is LEPVVVGMLILALGLSM. The Extracellular portion of the chain corresponds to 206–208; sequence GAN. Positions 209 to 223 form an intramembrane region, discontinuously helical; the sequence is CGIPLNPARDLGPRL. Positions 214–216 match the NPA 2 motif; that stretch reads NPA. The Extracellular portion of the chain corresponds to 224-241; that stretch reads FTYVAGWGPEVFSAGNGW. The chain crosses the membrane as a helical span at residues 242-262; sequence WWVPVVAPLVGATVGTATYQL. Over 263 to 301 the chain is Cytoplasmic; sequence LVALHHPEGPEPAQDLVSAQHKASELETPASAQMLECKL.

It belongs to the MIP/aquaporin (TC 1.A.8) family. Homotetramer; each monomer provides an independent glycerol/water pore. In terms of processing, N-glycosylation at Asn-133 increases the stability of the protein but has no effect on its activity. In terms of tissue distribution, detected in epithelial cells on villi in the ileum, and also in stomach, jejunum, colon, rectum, white adipose tissue and placenta (at protein level). Expressed in duodenum and jejunum. Highest expression in absorptive epithelial cells at the tips of villi in the jejunum. Detected in subcutaneous adipose tissue.

The protein localises to the apical cell membrane. It is found in the cell membrane. Its subcellular location is the lipid droplet. The catalysed reaction is glycerol(in) = glycerol(out). It carries out the reaction H2O(in) = H2O(out). The enzyme catalyses urea(in) = urea(out). Glycerol transport is regulated by pH, with the porin being permeable to glycerol at pH 5.5 but not at pH 7.4. Water permeability, however, is not influenced by pH. Functionally, aquaglyceroporins form homotetrameric transmembrane channels, with each monomer independently mediating glycerol and water transport across the plasma membrane along their osmotic gradient. Could also be permeable to urea. Among aquaglyceroporins, it exhibits a unique pH-gated glycerol transport activity, being more active at acidic pH. It most likely plays a central role in the efflux of glycerol formed during triglyceride hydrolysis in adipocytes and in glycerol uptake by enterocytes, as both processes occur and are stimulated at acidic pH. This Homo sapiens (Human) protein is Aquaporin-10.